A 665-amino-acid polypeptide reads, in one-letter code: Lamin-A (665 aa).

Position 1 is an N-acetylmethionine (methionine 1). Positions 1–29 (METPGQKRATRSTHTPLSPTRITRLQEKE) are head. Serine 18 carries the phosphoserine modification. The region spanning 27–383 (EKEDLQGLND…KLLEGEEERL (357 aa)) is the IF rod domain. Residues 30 to 66 (DLQGLNDRLAVYIDKVRSLELENARLRLRITESEDVI) form a coil 1A region. A linker 1 region spans residues 67–76 (SREVTGIKSA). Positions 77 to 214 (YETELADARK…SIYNEEMRET (138 aa)) are coil 1B. The linker 2 stretch occupies residues 215 to 238 (KRRHETRLVEVDNGRQREFESKLA). Residues 239–383 (DALHELRAQH…KLLEGEEERL (145 aa)) are coil 2. Disordered stretches follow at residues 381 to 441 (ERLR…SVEE), 550 to 581 (DDED…GEYN), and 602 to 641 (ASQG…LGES). Residues 384-664 (RLSPSPNTQK…AQVAPQNCSI (281 aa)) form a tail region. Serine 388 carries the post-translational modification Phosphoserine. Over residues 399–411 (IASHSGAHISSSA) the composition is skewed to low complexity. The Nuclear localization signal signature appears at 413 to 418 (KRRRLE). An LTD domain is found at 425–542 (SSFTQHARTT…EEVAMRKLVR (118 aa)). Residues 427 to 436 (FTQHARTTGK) show a composition bias toward polar residues. A compositionally biased stretch (low complexity) spans 605–630 (GSGLVTGSSGSSSSSVTLTRTYRSTG). Residue cysteine 662 is modified to Cysteine methyl ester. The S-farnesyl cysteine moiety is linked to residue cysteine 662. The propeptide at 663-665 (SIM) is removed in mature form.

It belongs to the intermediate filament family. Homodimer. Lamin dimers then assemble into dimeric head-to-tail polymers. Ultimately, two head-to-tail polymers assemble laterally into a protofilament with a uniformly shaped rod of 3.5 nm in diameter. Phosphorylation plays a key role in lamin organization, subcellular localization and nuclear envelope disintegration. Phosphorylation by CDK1 at Ser-18 at the onset of mitosis drives lamin disassembly and nuclear envelope breakdown.

Its subcellular location is the nucleus lamina. The protein resides in the nucleus envelope. It localises to the nucleus. The protein localises to the nucleoplasm. It is found in the nucleus matrix. In terms of biological role, lamins are intermediate filament proteins that assemble into a filamentous meshwork, and which constitute the major components of the nuclear lamina, a fibrous layer on the nucleoplasmic side of the inner nuclear membrane. Lamins provide a framework for the nuclear envelope, bridging the nuclear envelope and chromatin, thereby playing an important role in nuclear assembly, chromatin organization, nuclear membrane and telomere dynamics. The structural integrity of the lamina is strictly controlled by the cell cycle, as seen by the disintegration and formation of the nuclear envelope in prophase and telophase, respectively. The polypeptide is Lamin-A (lmna) (Xenopus laevis (African clawed frog)).